The chain runs to 159 residues: Phosphopantetheine adenylyltransferase (159 aa).

Thr10 is a binding site for substrate. ATP contacts are provided by residues 10–11 (TF) and His18. 3 residues coordinate substrate: Lys42, Met74, and Arg88. ATP is bound by residues 89 to 91 (GLR), Glu99, and 124 to 130 (WSFISSS).

This sequence belongs to the bacterial CoaD family. Homohexamer. Mg(2+) serves as cofactor.

The protein resides in the cytoplasm. It catalyses the reaction (R)-4'-phosphopantetheine + ATP + H(+) = 3'-dephospho-CoA + diphosphate. It participates in cofactor biosynthesis; coenzyme A biosynthesis; CoA from (R)-pantothenate: step 4/5. Functionally, reversibly transfers an adenylyl group from ATP to 4'-phosphopantetheine, yielding dephospho-CoA (dPCoA) and pyrophosphate. This is Phosphopantetheine adenylyltransferase from Salmonella choleraesuis (strain SC-B67).